The chain runs to 1109 residues: Zinc finger E-box-binding homeobox 1 (1109 aa).

Disordered stretches follow at residues 1–106 (MADG…DPNV) and 123–143 (PEED…NGTP). A compositionally biased stretch (low complexity) spans 15–30 (PRRNNVTNYNTVVEAN). A phosphoserine mark is found at S31 and S33. Acidic residues predominate over residues 87–98 (VKDDECDSDAEN). Residues 150–173 (LTCPYCDRGYKRFTSLKEHIKYRH) form a C2H2-type 1 zinc finger. Glycyl lysine isopeptide (Lys-Gly) (interchain with G-Cter in SUMO2) cross-links involve residues K166 and K175. 2 C2H2-type zinc fingers span residues 180 to 202 (FSCS…MTSH) and 220 to 242 (FKCT…LRIH). Residues 248 to 272 (YECPNCKKRFSHSGSYSSHISSKKC) form a C2H2-type 4; atypical zinc finger. Residues 278–307 (VNGRPRSGLKTSQCSSPSLSTSPGSPTRPQ) form a disordered region. K287 participates in a covalent cross-link: Glycyl lysine isopeptide (Lys-Gly) (interchain with G-Cter in SUMO2). Residues 288 to 304 (TSQCSSPSLSTSPGSPT) are compositionally biased toward low complexity. Residues S293 and S302 each carry the phosphoserine modification. Glycyl lysine isopeptide (Lys-Gly) (interchain with G-Cter in SUMO2) cross-links involve residues K311 and K315. Residue K327 forms a Glycyl lysine isopeptide (Lys-Gly) (interchain with G-Cter in SUMO); alternate linkage. K327 participates in a covalent cross-link: Glycyl lysine isopeptide (Lys-Gly) (interchain with G-Cter in SUMO2); alternate. Residues K419, K473, K484, K495, and K528 each participate in a glycyl lysine isopeptide (Lys-Gly) (interchain with G-Cter in SUMO2) cross-link. Disordered regions lie at residues 468–501 (VPQN…KDKS), 525–566 (PELK…SQPP), and 614–711 (QIPG…PQVE). Residues 483 to 501 (CKSEKSPEDLTVKSEKDKS) show a composition bias toward basic and acidic residues. The segment at residues 559-618 (DLSPSQPPLKNLLSLLKAYYALNAQPSTEELTKIADSVNLPLDVVKKWFEKMQAGQIPGQ) is a DNA-binding region (homeobox; atypical). The segment covering 654 to 665 (RGQSPLKMTSSP) has biased composition (polar residues). 4 positions are modified to phosphoserine: S657, S664, S671, and S678. Positions 673 to 703 (INGSRSCTSSPSPLNLSSARNPQGYSCVSEG) are enriched in polar residues. T680 is subject to Phosphothreonine. A Phosphoserine modification is found at S682. K752 is covalently cross-linked (Glycyl lysine isopeptide (Lys-Gly) (interchain with G-Cter in SUMO); alternate). Residue K752 forms a Glycyl lysine isopeptide (Lys-Gly) (interchain with G-Cter in SUMO2); alternate linkage. The segment at 834–873 (PPVKVIQPNGNQDERQDTSSEGVSVEDQNDSDCTPPKKKT) is disordered. 2 C2H2-type zinc fingers span residues 881 to 903 (YACD…KYEH) and 909 to 931 (HECG…MRLH). The C2H2-type 7; atypical zinc-finger motif lies at 937–958 (YQCDKCGKRFSHSGSYSQHMNH). Residues 968–1109 (EDRDAMEQED…RLSEEKTNEA (142 aa)) are disordered. The span at 1012-1066 (EEDEDSEKEEEEEDKEMEELQEDKECENPQEEEEEEEEEEEEEEEEEEEEAEEAE) shows a compositional bias: acidic residues. A compositionally biased stretch (low complexity) spans 1071–1087 (AAKTGGAVEEEAAQQAG). Basic and acidic residues predominate over residues 1097-1109 (ESKRLSEEKTNEA).

This sequence belongs to the delta-EF1/ZFH-1 C2H2-type zinc-finger family. As to quaternary structure, interacts (via N-terminus) with SMARCA4/BRG1. In terms of processing, ubiquitinated, leading to degradation in a proteasome-dependent manner. Deubiquitinated by USP51, leading to stabilization.

The protein localises to the nucleus. Functionally, acts as a transcriptional repressor. Binds to E-box sequences in the immunoglobulin heavy chain enhancer as well as in the regulatory regions of many other tissue-specific genes. Represses E-cadherin promoter and induces an epithelial-mesenchymal transition (EMT) by recruiting SMARCA4/BRG1. Represses BCL6 transcription in the presence of the corepressor CTBP1. Positively regulates neuronal differentiation. Represses RCOR1 transcription activation during neurogenesis. Represses transcription by binding to the E box (5'-CANNTG-3'). In the absence of TGFB1, acts as a repressor of COL1A2 transcription via binding to the E-box in the upstream enhancer region. The chain is Zinc finger E-box-binding homeobox 1 from Rattus norvegicus (Rat).